The primary structure comprises 284 residues: uncharacterized protein (284 aa).

2 stretches are compositionally biased toward low complexity: residues 110-123 (NGPR…PNNG) and 130-149 (NGPM…NGPN). Residues 110-176 (NGPRGRQMNG…PNEFDSDDDD (67 aa)) are disordered.

The protein resides in the virion. This is an uncharacterized protein from Acanthamoeba polyphaga mimivirus (APMV).